The following is a 465-amino-acid chain: Ribulose bisphosphate carboxylase large chain (465 aa).

The residue at position 4 (K4) is an N6,N6,N6-trimethyllysine. Residues N113 and T163 each coordinate substrate. Catalysis depends on K165, which acts as the Proton acceptor. K167 lines the substrate pocket. K191, D193, and E194 together coordinate Mg(2+). K191 is subject to N6-carboxylysine. Catalysis depends on H284, which acts as the Proton acceptor. Positions 285, 317, and 369 each coordinate substrate.

The protein belongs to the RuBisCO large chain family. Type I subfamily. In terms of assembly, heterohexadecamer of 8 large chains and 8 small chains; disulfide-linked. The disulfide link is formed within the large subunit homodimers. Requires Mg(2+) as cofactor. The disulfide bond which can form in the large chain dimeric partners within the hexadecamer appears to be associated with oxidative stress and protein turnover.

It is found in the plastid. The protein resides in the chloroplast. It catalyses the reaction 2 (2R)-3-phosphoglycerate + 2 H(+) = D-ribulose 1,5-bisphosphate + CO2 + H2O. It carries out the reaction D-ribulose 1,5-bisphosphate + O2 = 2-phosphoglycolate + (2R)-3-phosphoglycerate + 2 H(+). Functionally, ruBisCO catalyzes two reactions: the carboxylation of D-ribulose 1,5-bisphosphate, the primary event in carbon dioxide fixation, as well as the oxidative fragmentation of the pentose substrate in the photorespiration process. Both reactions occur simultaneously and in competition at the same active site. This is Ribulose bisphosphate carboxylase large chain from Idesia polycarpa (Iigiri tree).